The following is a 375-amino-acid chain: Squamosa promoter-binding-like protein 9 (375 aa).

Disordered stretches follow at residues 1–30 (MEMG…SFSG) and 43–73 (GGGG…QIPR). Residues 18–30 (SGGSSTESSSFSG) show a composition bias toward low complexity. The SBP-type zinc finger occupies 71–148 (IPRCQVEGCG…AGHNERRRKP (78 aa)). 8 residues coordinate Zn(2+): C74, C79, C96, H99, C115, C118, H122, and C134. The short motif at 131 to 147 (KRSCRRRLAGHNERRRK) is the Bipartite nuclear localization signal element. Disordered stretches follow at residues 252 to 278 (LLSN…NTWR) and 345 to 375 (SDHH…NWSL). The span at 262-275 (NNNNNNNNNNNNNN) shows a compositional bias: low complexity. The span at 345-362 (SDHHHQSRRQYMEDENTR) shows a compositional bias: basic and acidic residues. Over residues 363 to 375 (AYDSSSHHTNWSL) the composition is skewed to polar residues.

Zn(2+) serves as cofactor.

The protein resides in the nucleus. The protein localises to the cytoplasm. In terms of biological role, trans-acting factor that binds specifically to the consensus nucleotide sequence 5'-TNCGTACAA-3'. The chain is Squamosa promoter-binding-like protein 9 (SPL9) from Arabidopsis thaliana (Mouse-ear cress).